We begin with the raw amino-acid sequence, 381 residues long: Succinyl-diaminopimelate desuccinylase (381 aa).

H71 contacts Zn(2+). D73 is a catalytic residue. D104 contacts Zn(2+). The active-site Proton acceptor is E138. The Zn(2+) site is built by E139, E167, and H353.

The protein belongs to the peptidase M20A family. DapE subfamily. As to quaternary structure, homodimer. Requires Zn(2+) as cofactor. Co(2+) serves as cofactor.

The catalysed reaction is N-succinyl-(2S,6S)-2,6-diaminopimelate + H2O = (2S,6S)-2,6-diaminopimelate + succinate. Its pathway is amino-acid biosynthesis; L-lysine biosynthesis via DAP pathway; LL-2,6-diaminopimelate from (S)-tetrahydrodipicolinate (succinylase route): step 3/3. Functionally, catalyzes the hydrolysis of N-succinyl-L,L-diaminopimelic acid (SDAP), forming succinate and LL-2,6-diaminopimelate (DAP), an intermediate involved in the bacterial biosynthesis of lysine and meso-diaminopimelic acid, an essential component of bacterial cell walls. The sequence is that of Succinyl-diaminopimelate desuccinylase from Shewanella halifaxensis (strain HAW-EB4).